The sequence spans 806 residues: Enhancer of polycomb-like protein 1 (806 aa).

Disordered stretches follow at residues 403 to 461 (AITS…QEIG) and 751 to 806 (SLQQ…NAAA). The span at 411 to 420 (KRAKSSKSSK) shows a compositional bias: basic residues. Residues 421-439 (LHKEDSGLYADEKGSEPKK) show a composition bias toward basic and acidic residues. Residues 751–779 (SLQQQQMLQKGQQPINNAPHSQSSSPPSH) show a composition bias toward low complexity. Polar residues predominate over residues 785–795 (NPGSTPNQSSP).

Belongs to the enhancer of polycomb family. In terms of assembly, component of the NuA4 histone acetyltransferase complex.

The protein resides in the nucleus. Functionally, component of the NuA4 histone acetyltransferase complex which is involved in transcriptional activation of selected genes principally by acetylation of nucleosomal histone H4 and H2A. The NuA4 complex is also involved in DNA repair. Involved in gene silencing by neighboring heterochromatin, blockage of the silencing spreading along the chromosome, and required for cell cycle progression through G2/M. This Kluyveromyces lactis (strain ATCC 8585 / CBS 2359 / DSM 70799 / NBRC 1267 / NRRL Y-1140 / WM37) (Yeast) protein is Enhancer of polycomb-like protein 1 (EPL1).